The primary structure comprises 807 residues: Glycerol-3-phosphate acyltransferase (807 aa).

Positions 309–314 (CHRSHM) match the HXXXXD motif motif.

Belongs to the GPAT/DAPAT family.

It localises to the cell inner membrane. The catalysed reaction is sn-glycerol 3-phosphate + an acyl-CoA = a 1-acyl-sn-glycero-3-phosphate + CoA. Its pathway is phospholipid metabolism; CDP-diacylglycerol biosynthesis; CDP-diacylglycerol from sn-glycerol 3-phosphate: step 1/3. This is Glycerol-3-phosphate acyltransferase from Aeromonas hydrophila subsp. hydrophila (strain ATCC 7966 / DSM 30187 / BCRC 13018 / CCUG 14551 / JCM 1027 / KCTC 2358 / NCIMB 9240 / NCTC 8049).